Here is an 84-residue protein sequence, read N- to C-terminus: Toxin To7 (84 aa).

The N-terminal stretch at M1 to A20 is a signal peptide. An LCN-type CS-alpha/beta domain is found at L21–Y83. Disulfide bonds link C32-C82, C36-C59, C42-C64, and C46-C66.

As to expression, expressed by the venom gland.

The protein localises to the secreted. In terms of biological role, inhibits voltage-gated sodium channels (Nav). The chain is Toxin To7 from Tityus obscurus (Amazonian scorpion).